We begin with the raw amino-acid sequence, 233 residues long: Preprocaerulein type-4 (233 aa).

An N-terminal signal peptide occupies residues 1–26 (MFKGILLCVLFAVLSANPLSQPEGFA). Positions 27-72 (DEERDVRGLASLLGKALKATLKIGTHFLGGAPQQREANDERRFADG) are excised as a propeptide. Q73 bears the Pyrrolidone carboxylic acid mark. Y76 is modified (sulfotyrosine). A Phenylalanine amide modification is found at F82. The propeptide occupies 86–87 (DG). A Pyrrolidone carboxylic acid modification is found at Q88. A Sulfotyrosine modification is found at Y91. At F97 the chain carries Phenylalanine amide. Residues 101–151 (DDEDDVHERDVRGFGSFLGKALKAALKIGANALGGAPQQREANDERRFADG) constitute a propeptide that is removed on maturation. Pyrrolidone carboxylic acid is present on Q152. Residue Y155 is modified to Sulfotyrosine. F161 is modified (phenylalanine amide). Residues 165 to 215 (DDEDDVNERDVRGFGSFLGKALKAALKIGANALGGSPQQREANDERRFADG) constitute a propeptide that is removed on maturation. The segment at 197–233 (LGGSPQQREANDERRFADGQQDYTGWMDFGRRNGEDD) is disordered. Residue Q216 is modified to Pyrrolidone carboxylic acid. The residue at position 219 (Y219) is a Sulfotyrosine. Residue F225 is modified to Phenylalanine amide. Positions 229–233 (NGEDD) are excised as a propeptide.

The protein belongs to the gastrin/cholecystokinin family. In terms of tissue distribution, expressed by the skin glands.

The protein resides in the secreted. Its function is as follows. The pharmacological activities of caerulein are quite similar to the physiological activities of gastrin and related peptides. This is Preprocaerulein type-4 from Xenopus laevis (African clawed frog).